The sequence spans 185 residues: Ribosome-recycling factor (185 aa).

The protein belongs to the RRF family.

Its subcellular location is the cytoplasm. Its function is as follows. Responsible for the release of ribosomes from messenger RNA at the termination of protein biosynthesis. May increase the efficiency of translation by recycling ribosomes from one round of translation to another. The polypeptide is Ribosome-recycling factor (Bacillus licheniformis (strain ATCC 14580 / DSM 13 / JCM 2505 / CCUG 7422 / NBRC 12200 / NCIMB 9375 / NCTC 10341 / NRRL NRS-1264 / Gibson 46)).